The sequence spans 183 residues: Threonylcarbamoyl-AMP synthase (183 aa).

The YrdC-like domain maps to 1–183; that stretch reads MNITQIIEKL…LFTNQLVRQG (183 aa).

It belongs to the SUA5 family. TsaC subfamily.

It localises to the cytoplasm. The enzyme catalyses L-threonine + hydrogencarbonate + ATP = L-threonylcarbamoyladenylate + diphosphate + H2O. Functionally, required for the formation of a threonylcarbamoyl group on adenosine at position 37 (t(6)A37) in tRNAs that read codons beginning with adenine. Catalyzes the conversion of L-threonine, HCO(3)(-)/CO(2) and ATP to give threonylcarbamoyl-AMP (TC-AMP) as the acyladenylate intermediate, with the release of diphosphate. This Histophilus somni (strain 129Pt) (Haemophilus somnus) protein is Threonylcarbamoyl-AMP synthase.